A 231-amino-acid chain; its full sequence is Potassium/proton antiporter CemA (231 aa).

3 consecutive transmembrane segments (helical) span residues 9–29, 116–136, and 191–211; these read FIPL…SFLF, IICF…LIIL, and IISG…KYWI.

It belongs to the CemA family.

It is found in the plastid. The protein resides in the chloroplast inner membrane. It carries out the reaction K(+)(in) + H(+)(out) = K(+)(out) + H(+)(in). Functionally, contributes to K(+)/H(+) antiport activity by supporting proton efflux to control proton extrusion and homeostasis in chloroplasts in a light-dependent manner to modulate photosynthesis. Prevents excessive induction of non-photochemical quenching (NPQ) under continuous-light conditions. Indirectly promotes efficient inorganic carbon uptake into chloroplasts. This chain is Potassium/proton antiporter CemA, found in Manihot esculenta (Cassava).